Consider the following 194-residue polypeptide: Putative L,D-transpeptidase YciB (194 aa).

The first 19 residues, 1-19 (MKLSLFIIAVLMPVILLSA), serve as a signal peptide directing secretion. Residue C20 is the site of N-palmitoyl cysteine attachment. Residue C20 is the site of S-diacylglycerol cysteine attachment. Residues 68 to 194 (VWIDVNVKEQ…IPEHTKVVIS (127 aa)) enclose the L,D-TPase catalytic domain. The active-site Proton donor/acceptor is the H144. The Nucleophile role is filled by C170.

The protein belongs to the YkuD family.

The protein localises to the cell membrane. It participates in cell wall biogenesis; peptidoglycan biosynthesis. The chain is Putative L,D-transpeptidase YciB (yciB) from Bacillus subtilis (strain 168).